Here is a 264-residue protein sequence, read N- to C-terminus: S-adenosylmethionine decarboxylase proenzyme (264 aa).

The Schiff-base intermediate with substrate; via pyruvic acid role is filled by serine 113. Position 113 is a pyruvic acid (Ser); by autocatalysis (serine 113). Histidine 118 serves as the catalytic Proton acceptor; for processing activity. Cysteine 141 acts as the Proton donor; for catalytic activity in catalysis.

The protein belongs to the prokaryotic AdoMetDC family. Type 2 subfamily. As to quaternary structure, heterooctamer of four alpha and four beta chains arranged as a tetramer of alpha/beta heterodimers. Requires pyruvate as cofactor. Is synthesized initially as an inactive proenzyme. Formation of the active enzyme involves a self-maturation process in which the active site pyruvoyl group is generated from an internal serine residue via an autocatalytic post-translational modification. Two non-identical subunits are generated from the proenzyme in this reaction, and the pyruvate is formed at the N-terminus of the alpha chain, which is derived from the carboxyl end of the proenzyme. The post-translation cleavage follows an unusual pathway, termed non-hydrolytic serinolysis, in which the side chain hydroxyl group of the serine supplies its oxygen atom to form the C-terminus of the beta chain, while the remainder of the serine residue undergoes an oxidative deamination to produce ammonia and the pyruvoyl group blocking the N-terminus of the alpha chain.

The enzyme catalyses S-adenosyl-L-methionine + H(+) = S-adenosyl 3-(methylsulfanyl)propylamine + CO2. Its pathway is amine and polyamine biosynthesis; S-adenosylmethioninamine biosynthesis; S-adenosylmethioninamine from S-adenosyl-L-methionine: step 1/1. Functionally, catalyzes the decarboxylation of S-adenosylmethionine to S-adenosylmethioninamine (dcAdoMet), the propylamine donor required for the synthesis of the polyamines spermine and spermidine from the diamine putrescine. This Xylella fastidiosa (strain Temecula1 / ATCC 700964) protein is S-adenosylmethionine decarboxylase proenzyme.